A 578-amino-acid chain; its full sequence is 2-succinyl-5-enolpyruvyl-6-hydroxy-3-cyclohexene-1-carboxylate synthase (578 aa).

A disordered region spans residues 186-208 (LPAAGGEHHPAEPRSTPWDGPVP).

The protein belongs to the TPP enzyme family. MenD subfamily. As to quaternary structure, homodimer. The cofactor is Mg(2+). It depends on Mn(2+) as a cofactor. Thiamine diphosphate is required as a cofactor.

The catalysed reaction is isochorismate + 2-oxoglutarate + H(+) = 5-enolpyruvoyl-6-hydroxy-2-succinyl-cyclohex-3-ene-1-carboxylate + CO2. It functions in the pathway quinol/quinone metabolism; 1,4-dihydroxy-2-naphthoate biosynthesis; 1,4-dihydroxy-2-naphthoate from chorismate: step 2/7. It participates in cofactor biosynthesis; phylloquinone biosynthesis. Functionally, catalyzes the thiamine diphosphate-dependent decarboxylation of 2-oxoglutarate and the subsequent addition of the resulting succinic semialdehyde-thiamine pyrophosphate anion to isochorismate to yield 2-succinyl-5-enolpyruvyl-6-hydroxy-3-cyclohexene-1-carboxylate (SEPHCHC). This is 2-succinyl-5-enolpyruvyl-6-hydroxy-3-cyclohexene-1-carboxylate synthase from Synechococcus sp. (strain WH7803).